The sequence spans 339 residues: tRNA N6-adenosine threonylcarbamoyltransferase (339 aa).

Fe cation is bound by residues histidine 117 and histidine 121. Substrate contacts are provided by residues 140–144 (VVSGG), aspartate 173, glycine 186, and asparagine 279. Residue aspartate 307 participates in Fe cation binding.

Belongs to the KAE1 / TsaD family. The cofactor is Fe(2+).

It localises to the cytoplasm. It catalyses the reaction L-threonylcarbamoyladenylate + adenosine(37) in tRNA = N(6)-L-threonylcarbamoyladenosine(37) in tRNA + AMP + H(+). Required for the formation of a threonylcarbamoyl group on adenosine at position 37 (t(6)A37) in tRNAs that read codons beginning with adenine. Is involved in the transfer of the threonylcarbamoyl moiety of threonylcarbamoyl-AMP (TC-AMP) to the N6 group of A37, together with TsaE and TsaB. TsaD likely plays a direct catalytic role in this reaction. In Syntrophomonas wolfei subsp. wolfei (strain DSM 2245B / Goettingen), this protein is tRNA N6-adenosine threonylcarbamoyltransferase.